We begin with the raw amino-acid sequence, 145 residues long: D-aminoacyl-tRNA deacylase (145 aa).

The short motif at 137–138 (GP) is the Gly-cisPro motif, important for rejection of L-amino acids element.

Belongs to the DTD family. In terms of assembly, homodimer.

The protein localises to the cytoplasm. The catalysed reaction is glycyl-tRNA(Ala) + H2O = tRNA(Ala) + glycine + H(+). The enzyme catalyses a D-aminoacyl-tRNA + H2O = a tRNA + a D-alpha-amino acid + H(+). An aminoacyl-tRNA editing enzyme that deacylates mischarged D-aminoacyl-tRNAs. Also deacylates mischarged glycyl-tRNA(Ala), protecting cells against glycine mischarging by AlaRS. Acts via tRNA-based rather than protein-based catalysis; rejects L-amino acids rather than detecting D-amino acids in the active site. By recycling D-aminoacyl-tRNA to D-amino acids and free tRNA molecules, this enzyme counteracts the toxicity associated with the formation of D-aminoacyl-tRNA entities in vivo and helps enforce protein L-homochirality. The protein is D-aminoacyl-tRNA deacylase of Idiomarina loihiensis (strain ATCC BAA-735 / DSM 15497 / L2-TR).